The chain runs to 206 residues: Elongation factor 1-beta (206 aa).

Ala2 carries the N-acetylalanine modification. Residue Lys13 forms a Glycyl lysine isopeptide (Lys-Gly) (interchain with G-Cter in ubiquitin) linkage. Residues Ser31 and Ser86 each carry the phosphoserine modification.

The protein belongs to the EF-1-beta/EF-1-delta family. The eukaryotic elongation factor 1 complex (eEF1) is probably a heterohexamer. Two trimeric complexes, each composed of eEF1A (TEF1 or TEF2), eEF1Balpha (EFB1) and eEF1Bgamma (CAM1 or TEF4), are probably dimerized via the eF1Bgamma subunits. eEF1Balpha interacts directly with eEF1A. eEF1Balpha and eEF1Bgamma form the eEF1B subcomplex with the GEF activity. Post-translationally, S-thiolated in response to oxidative stress, probably inhibiting the protein and causing a reduction in protein synthesis.

Its pathway is protein biosynthesis; polypeptide chain elongation. Catalytic subunit of the guanine nucleotide exchange factor (GEF) (eEF1B subcomplex) of the eukaryotic elongation factor 1 complex (eEF1). Stimulates the exchange of GDP for GTP on elongation factor 1A (eEF1A), probably by displacing GDP from the nucleotide binding pocket in eEF1A. The 30-fold higher concentration of GTP compared to GDP in cells favors the formation of eEF1A-GTP, which rapidly forms a ternary complex with aminoacyl-tRNA that in turn displaces eEF1B from the complex. The chain is Elongation factor 1-beta (EFB1) from Saccharomyces cerevisiae (strain ATCC 204508 / S288c) (Baker's yeast).